A 407-amino-acid polypeptide reads, in one-letter code: Sensor histidine kinase YdfH (407 aa).

The Cytoplasmic portion of the chain corresponds to 1 to 25 (MLIRNPFKDKYYSHDRRALNMLALR). 2 helical membrane passes run 26-46 (VPGLAFILMIYIASIVLQFVS) and 47-67 (GGWSILLLYAFTILIAIFALL). Residues 68–78 (HWHSYRWVKKR) are Cytoplasmic-facing. 2 helical membrane-spanning segments follow: residues 79 to 99 (VILYFAVQGLITFALANLMTG) and 100 to 120 (FFILVIIGLYAFLIGQIIGMA). At 121–125 (DRRRT) the chain is on the cytoplasmic side. The helical transmembrane segment at 126–146 (FLILYLLLLLVINSAYHLHKG) threads the bilayer. Topologically, residues 147-150 (EVLH) are extracellular. A helical transmembrane segment spans residues 151-171 (FIVIAAPIMIVIITYAATFFA). The Cytoplasmic segment spans residues 172 to 407 (QVDEKIKAQL…VPIQGEMQDE (236 aa)). In terms of domain architecture, Histidine kinase spans 201 to 402 (ERQRMARDLH…QIEITVPIQG (202 aa)). His-210 is subject to Phosphohistidine; by autocatalysis.

The protein localises to the cell membrane. The enzyme catalyses ATP + protein L-histidine = ADP + protein N-phospho-L-histidine.. In terms of biological role, member of the two-component regulatory system YdfH/YdfI. May activate YdfI by phosphorylation. This chain is Sensor histidine kinase YdfH (ydfH), found in Bacillus subtilis (strain 168).